A 363-amino-acid chain; its full sequence is Spermatogenesis-associated protein 22 (363 aa).

Composition is skewed to polar residues over residues 1 to 12 (MKRSLNENSARS) and 145 to 157 (SCPMSSGAQQQKQ). Disordered regions lie at residues 1-51 (MKRS…DNYD) and 145-169 (SCPMSSGAQQQKQFGIPEPPNLPRN).

In terms of assembly, component of a multiprotein complex with MEIOB and RPA2. Interacts with MEIOB. Interacts with the complex BRME1:HSF2BP:BRCA2. Expressed in testis.

The protein localises to the chromosome. Functionally, meiosis-specific protein required for homologous recombination in meiosis I. The chain is Spermatogenesis-associated protein 22 (SPATA22) from Macaca fascicularis (Crab-eating macaque).